A 422-amino-acid chain; its full sequence is Testin (422 aa).

Positions 92–199 (MILTSPVAAK…GDVKLPKEVE (108 aa)) constitute a PET domain. The interval 135–165 (QPVAGSEGAQYRKKQLAKQLPAHDQDPSKCH) is disordered. Basic and acidic residues predominate over residues 155 to 165 (PAHDQDPSKCH). 3 LIM zinc-binding domains span residues 234 to 299 (YYCF…SEKP), 300 to 359 (RCAG…NHAV), and 360 to 422 (SCQG…KMSS).

The protein belongs to the prickle / espinas / testin family.

It is found in the cytoplasm. It localises to the cell cortex. Its subcellular location is the cell junction. The protein resides in the focal adhesion. Functionally, scaffold protein that may play a role in cell adhesion, cell spreading and in the reorganization of the actin cytoskeleton. May inhibit cell growth. Regulates cranial neural crest migration. Acts together with prickle1 to control axial elongation. This chain is Testin, found in Xenopus tropicalis (Western clawed frog).